Reading from the N-terminus, the 229-residue chain is 3-dehydroquinate dehydratase (229 aa).

3-dehydroquinate-binding positions include 33 to 35 (EWR) and arginine 65. Histidine 121 serves as the catalytic Proton donor/acceptor. Lysine 146 acts as the Schiff-base intermediate with substrate in catalysis. The 3-dehydroquinate site is built by arginine 188, serine 207, and glutamine 211.

The protein belongs to the type-I 3-dehydroquinase family. As to quaternary structure, homodimer.

It catalyses the reaction 3-dehydroquinate = 3-dehydroshikimate + H2O. It functions in the pathway metabolic intermediate biosynthesis; chorismate biosynthesis; chorismate from D-erythrose 4-phosphate and phosphoenolpyruvate: step 3/7. In terms of biological role, involved in the third step of the chorismate pathway, which leads to the biosynthesis of aromatic amino acids. Catalyzes the cis-dehydration of 3-dehydroquinate (DHQ) and introduces the first double bond of the aromatic ring to yield 3-dehydroshikimate. This is 3-dehydroquinate dehydratase from Lactococcus lactis subsp. cremoris (strain SK11).